The sequence spans 911 residues: Valine--tRNA ligase (911 aa).

Positions 57 to 67 match the 'HIGH' region motif; the sequence is PTVSGSLHVGH. A 'KMSKS' region motif is present at residues 599-603; that stretch reads KMSKS. Residue Lys602 participates in ATP binding. The tract at residues 882–911 is disordered; it reads EESAAEDAPETEVAVEASELGEPPVKKPKH.

It belongs to the class-I aminoacyl-tRNA synthetase family. ValS type 2 subfamily. In terms of assembly, monomer.

Its subcellular location is the cytoplasm. The catalysed reaction is tRNA(Val) + L-valine + ATP = L-valyl-tRNA(Val) + AMP + diphosphate. In terms of biological role, catalyzes the attachment of valine to tRNA(Val). As ValRS can inadvertently accommodate and process structurally similar amino acids such as threonine, to avoid such errors, it has a 'posttransfer' editing activity that hydrolyzes mischarged Thr-tRNA(Val) in a tRNA-dependent manner. In Bifidobacterium longum subsp. infantis (strain ATCC 15697 / DSM 20088 / JCM 1222 / NCTC 11817 / S12), this protein is Valine--tRNA ligase.